A 463-amino-acid polypeptide reads, in one-letter code: Bifunctional protein HldE (463 aa).

Residues 1–315 (MKKILVIGDL…LILNQTHPKI (315 aa)) are ribokinase. 191 to 194 (NRAE) is an ATP binding site. The active site involves Asp260. The interval 334–463 (FTNGCFDLLH…IEKIKRTHND (130 aa)) is cytidylyltransferase.

In the N-terminal section; belongs to the carbohydrate kinase PfkB family. This sequence in the C-terminal section; belongs to the cytidylyltransferase family. In terms of assembly, homodimer.

It carries out the reaction D-glycero-beta-D-manno-heptose 7-phosphate + ATP = D-glycero-beta-D-manno-heptose 1,7-bisphosphate + ADP + H(+). The catalysed reaction is D-glycero-beta-D-manno-heptose 1-phosphate + ATP + H(+) = ADP-D-glycero-beta-D-manno-heptose + diphosphate. It functions in the pathway nucleotide-sugar biosynthesis; ADP-L-glycero-beta-D-manno-heptose biosynthesis; ADP-L-glycero-beta-D-manno-heptose from D-glycero-beta-D-manno-heptose 7-phosphate: step 1/4. It participates in nucleotide-sugar biosynthesis; ADP-L-glycero-beta-D-manno-heptose biosynthesis; ADP-L-glycero-beta-D-manno-heptose from D-glycero-beta-D-manno-heptose 7-phosphate: step 3/4. Functionally, catalyzes the phosphorylation of D-glycero-D-manno-heptose 7-phosphate at the C-1 position to selectively form D-glycero-beta-D-manno-heptose-1,7-bisphosphate. Its function is as follows. Catalyzes the ADP transfer from ATP to D-glycero-beta-D-manno-heptose 1-phosphate, yielding ADP-D-glycero-beta-D-manno-heptose. This is Bifunctional protein HldE from Helicobacter pylori (strain HPAG1).